We begin with the raw amino-acid sequence, 1380 residues long: Carboxypeptidase D (1380 aa).

Positions 1–31 are cleaved as a signal peptide; that stretch reads MASGRDERPPWRLGRLLLLMCLLLLGSSARA. At 32-1299 the chain is on the extracellular side; it reads AHIKKAEATT…DNRIFGLPRE (1268 aa). The Peptidase M14 1 domain maps to 57 to 380; sequence RYYHEEELES…ESLITLIEKV (324 aa). Zn(2+) is bound by residues H139 and E142. The short motif at 162-164 is the Cell attachment site element; that stretch reads RGD. N172 is a glycosylation site (N-linked (GlcNAc...) asparagine). The interval 190–232 is disordered; sequence AREGDCGFGDGGPSGASGRDNSRGRDLNRSFPDQFSTGEPPAL. Over residues 195–204 the composition is skewed to gly residues; it reads CGFGDGGPSG. N217 carries N-linked (GlcNAc...) asparagine glycosylation. H257 lines the Zn(2+) pocket. Y265 is subject to Phosphotyrosine. At S270 the chain carries Phosphoserine. E350 functions as the Proton donor/acceptor in the catalytic mechanism. N399, N410, N429, and N522 each carry an N-linked (GlcNAc...) asparagine glycan. Residues 502–792 form the Peptidase M14 2 domain; the sequence is HHHHFPDMEI…RSLIQFMKQV (291 aa). The Zn(2+) site is built by H564 and E567. N-linked (GlcNAc...) asparagine glycosylation occurs at N626. Position 671 (H671) interacts with Zn(2+). Residue E762 is the Proton donor/acceptor of the active site. 4 N-linked (GlcNAc...) asparagine glycosylation sites follow: N811, N855, N867, and N879. Residues 874 to 899 are disordered; it reads STDSNNESKKGKGASSSTNDASDPTT. The segment covering 887 to 897 has biased composition (polar residues); the sequence is ASSSTNDASDP. One can recognise a Peptidase M14 3 domain in the interval 932-1211; it reads RYHSYKDLSE…RSLLSMLVEV (280 aa). N955, N978, N1070, and N1142 each carry an N-linked (GlcNAc...) asparagine glycan. A helical transmembrane segment spans residues 1300–1320; sequence LVVTVSGATMSALILTACIIW. 3 S-palmitoyl cysteine lipidation sites follow: C1317, C1321, and C1323. The Cytoplasmic portion of the chain corresponds to 1321 to 1380; sequence CICSIKSNRHKDGFHRLRQHHDEYEDEIRMMSTGSKKSLLSHEFQDETDTEEETLYSSKH. Phosphoserine is present on residues S1358 and S1361. The tract at residues 1359 to 1380 is disordered; it reads LLSHEFQDETDTEEETLYSSKH. A phosphothreonine mark is found at T1368 and T1370.

Belongs to the peptidase M14 family. It depends on Zn(2+) as a cofactor. As to expression, highly expressed in placenta, pancreas and hepatoma cells. Lower levels found in skeletal muscle, heart and colon carcinoma and melanoma cell lines.

The protein resides in the cell membrane. It catalyses the reaction Releases C-terminal Arg and Lys from polypeptides.. In Homo sapiens (Human), this protein is Carboxypeptidase D (CPD).